We begin with the raw amino-acid sequence, 128 residues long: Phosphoribosyl-AMP cyclohydrolase (128 aa).

Position 89 (aspartate 89) interacts with Mg(2+). Residue cysteine 90 participates in Zn(2+) binding. Mg(2+) is bound by residues aspartate 91 and aspartate 93. Residues cysteine 106 and cysteine 113 each coordinate Zn(2+).

The protein belongs to the PRA-CH family. In terms of assembly, homodimer. Mg(2+) serves as cofactor. Requires Zn(2+) as cofactor.

It localises to the cytoplasm. It carries out the reaction 1-(5-phospho-beta-D-ribosyl)-5'-AMP + H2O = 1-(5-phospho-beta-D-ribosyl)-5-[(5-phospho-beta-D-ribosylamino)methylideneamino]imidazole-4-carboxamide. It participates in amino-acid biosynthesis; L-histidine biosynthesis; L-histidine from 5-phospho-alpha-D-ribose 1-diphosphate: step 3/9. Functionally, catalyzes the hydrolysis of the adenine ring of phosphoribosyl-AMP. In Pyrobaculum calidifontis (strain DSM 21063 / JCM 11548 / VA1), this protein is Phosphoribosyl-AMP cyclohydrolase.